Here is a 116-residue protein sequence, read N- to C-terminus: Small ribosomal subunit protein bS6 (116 aa).

Residues 94–116 (ESITEPSPLTKPKEDRKGDSEAA) are disordered. The span at 104–116 (KPKEDRKGDSEAA) shows a compositional bias: basic and acidic residues.

The protein belongs to the bacterial ribosomal protein bS6 family.

Binds together with bS18 to 16S ribosomal RNA. This Idiomarina loihiensis (strain ATCC BAA-735 / DSM 15497 / L2-TR) protein is Small ribosomal subunit protein bS6.